Here is a 105-residue protein sequence, read N- to C-terminus: MAHNHNHDHNHEHQHEVITLVDENGNETLFEILLTIDGREEFGKNYVLLVPAGAEEDEQGEIEIQAYSFTENADGTEGDLQPIPEDSDAEWDMIEEVFNSFLDEE.

Belongs to the UPF0473 family.

The chain is UPF0473 protein SAG2089 from Streptococcus agalactiae serotype V (strain ATCC BAA-611 / 2603 V/R).